The following is a 662-amino-acid chain: Protein transport Sec1b (662 aa).

This sequence belongs to the STXBP/unc-18/SEC1 family.

Its function is as follows. Involved in the vesicle trafficking. Binds syntaxins. This Arabidopsis thaliana (Mouse-ear cress) protein is Protein transport Sec1b (SEC1B).